The chain runs to 147 residues: Large ribosomal subunit protein uL15 (147 aa).

The disordered stretch occupies residues 1–55 (MKLHEIAPQPGSTKRRRRVGRGVSAGQGASCGLGMRGQKSRSGTGTRPGFEGGQM). Gly residues predominate over residues 23-35 (VSAGQGASCGLGM).

Belongs to the universal ribosomal protein uL15 family. Part of the 50S ribosomal subunit.

Binds to the 23S rRNA. The chain is Large ribosomal subunit protein uL15 from Microcystis aeruginosa (strain NIES-843 / IAM M-2473).